Consider the following 148-residue polypeptide: Large ribosomal subunit protein uL15 (148 aa).

The tract at residues 1 to 51 (MNLSSLKPAEGAVKSRKRIGRGPGSGLGGTSTRGHKGAKSRSGYSKKIGFE) is disordered. A compositionally biased stretch (gly residues) spans 21-31 (RGPGSGLGGTS).

This sequence belongs to the universal ribosomal protein uL15 family. Part of the 50S ribosomal subunit.

Functionally, binds to the 23S rRNA. In Porphyromonas gingivalis (strain ATCC 33277 / DSM 20709 / CIP 103683 / JCM 12257 / NCTC 11834 / 2561), this protein is Large ribosomal subunit protein uL15.